The following is a 374-amino-acid chain: Peptide chain release factor 2 (374 aa).

Position 254 is an N5-methylglutamine (Gln254).

Belongs to the prokaryotic/mitochondrial release factor family. Methylated by PrmC. Methylation increases the termination efficiency of RF2.

The protein resides in the cytoplasm. Peptide chain release factor 2 directs the termination of translation in response to the peptide chain termination codons UGA and UAA. In Renibacterium salmoninarum (strain ATCC 33209 / DSM 20767 / JCM 11484 / NBRC 15589 / NCIMB 2235), this protein is Peptide chain release factor 2.